The chain runs to 151 residues: Ribosomal RNA large subunit methyltransferase H (151 aa).

S-adenosyl-L-methionine-binding positions include Leu70, Gly99, and 118–123 (LSKLTF).

The protein belongs to the RNA methyltransferase RlmH family. In terms of assembly, homodimer.

The protein resides in the cytoplasm. The catalysed reaction is pseudouridine(1915) in 23S rRNA + S-adenosyl-L-methionine = N(3)-methylpseudouridine(1915) in 23S rRNA + S-adenosyl-L-homocysteine + H(+). Functionally, specifically methylates the pseudouridine at position 1915 (m3Psi1915) in 23S rRNA. The protein is Ribosomal RNA large subunit methyltransferase H of Gloeobacter violaceus (strain ATCC 29082 / PCC 7421).